We begin with the raw amino-acid sequence, 370 residues long: tRNA-specific 2-thiouridylase MnmA (370 aa).

ATP contacts are provided by residues 14-21 (GMSGGVDS) and Met40. The tract at residues 100–102 (NPD) is interaction with target base in tRNA. Cys105 (nucleophile) is an active-site residue. Cys105 and Cys205 are disulfide-bonded. Gly129 contributes to the ATP binding site. Positions 155–157 (KDQ) are interaction with tRNA. The Cysteine persulfide intermediate role is filled by Cys205. The tract at residues 321 to 322 (RY) is interaction with tRNA.

The protein belongs to the MnmA/TRMU family.

It localises to the cytoplasm. The catalysed reaction is S-sulfanyl-L-cysteinyl-[protein] + uridine(34) in tRNA + AH2 + ATP = 2-thiouridine(34) in tRNA + L-cysteinyl-[protein] + A + AMP + diphosphate + H(+). Its function is as follows. Catalyzes the 2-thiolation of uridine at the wobble position (U34) of tRNA, leading to the formation of s(2)U34. The protein is tRNA-specific 2-thiouridylase MnmA of Bordetella avium (strain 197N).